Consider the following 513-residue polypeptide: Putative fucosyltransferase-like protein (513 aa).

Residues 1–34 (MGVFSNLRGPRAGATHDEFPATNGSPSSSSSPSS) are disordered. Over 1–39 (MGVFSNLRGPRAGATHDEFPATNGSPSSSSSPSSSIKRK) the chain is Cytoplasmic. Over residues 25–34 (SPSSSSSPSS) the composition is skewed to low complexity. A helical; Signal-anchor for type II membrane protein transmembrane segment spans residues 40–60 (LSNLLPLCVALVVIAEIGFLG). The Lumenal segment spans residues 61–513 (RLDKVALVDT…PCAKFEVVFV (453 aa)). Asparagine 348 and asparagine 493 each carry an N-linked (GlcNAc...) asparagine glycan.

Belongs to the glycosyltransferase 10 family.

It is found in the golgi apparatus. The protein localises to the golgi stack membrane. Its pathway is protein modification; protein glycosylation. In terms of biological role, may be involved in cell wall biosynthesis. May act as a fucosyltransferase. The protein is Putative fucosyltransferase-like protein (FUT12) of Arabidopsis thaliana (Mouse-ear cress).